Consider the following 199-residue polypeptide: Recombination protein RecR (199 aa).

A C4-type zinc finger spans residues 56 to 71; sequence CQVCFHLSAESTCEIC. Positions 79–173 constitute a Toprim domain; that stretch reads QTLCVVADSR…KVTRIAFGLP (95 aa).

The protein belongs to the RecR family.

Functionally, may play a role in DNA repair. It seems to be involved in an RecBC-independent recombinational process of DNA repair. It may act with RecF and RecO. The protein is Recombination protein RecR of Gloeothece citriformis (strain PCC 7424) (Cyanothece sp. (strain PCC 7424)).